We begin with the raw amino-acid sequence, 457 residues long: UDP-N-acetylmuramate--L-alanine ligase (457 aa).

109–115 (GTDGKTT) serves as a coordination point for ATP.

This sequence belongs to the MurCDEF family.

Its subcellular location is the cytoplasm. The catalysed reaction is UDP-N-acetyl-alpha-D-muramate + L-alanine + ATP = UDP-N-acetyl-alpha-D-muramoyl-L-alanine + ADP + phosphate + H(+). It functions in the pathway cell wall biogenesis; peptidoglycan biosynthesis. Its function is as follows. Cell wall formation. This is UDP-N-acetylmuramate--L-alanine ligase from Thermotoga petrophila (strain ATCC BAA-488 / DSM 13995 / JCM 10881 / RKU-1).